Consider the following 790-residue polypeptide: Potassium transporter 22 (790 aa).

Residues 1 to 64 (MAQQQGQGAG…HGEGWARTLR (64 aa)) lie on the Cytoplasmic side of the membrane. Residues 65-85 (LAFQCFGVLYGDIGTSPLYVY) traverse the membrane as a helical segment. Residues 86 to 98 (STTFDGGIRHTDD) are Extracellular-facing. Residues 99–119 (LLGVLSLIIYSFLLFTIIKYV) traverse the membrane as a helical segment. Residues 120-198 (YIALRANDDG…DLLENSRPVR (79 aa)) are Cytoplasmic-facing. Residues 199 to 219 (ISLFLLTILATAMVISDACLT) traverse the membrane as a helical segment. Residues 220-236 (PAISVLSAVGGLKDKAP) lie on the Extracellular side of the membrane. Residues 237–257 (HLNTEQVVWVTVGILVMLFAV) form a helical membrane-spanning segment. The Cytoplasmic portion of the chain corresponds to 258-264 (QRFGTDK). A helical transmembrane segment spans residues 265-285 (VGYLFAPVVLLWLLLIGGVGV). Residues 286 to 318 (YNLAAHDVGVLRAFNPKYILDYFRRNGRHGWVS) are Extracellular-facing. The helical transmembrane segment at 319 to 339 (LGGVLLCFTGTEALFADLGCF) threads the bilayer. Over 340–345 (SIRSIQ) the chain is Cytoplasmic. A helical membrane pass occupies residues 346–366 (LSFAFGLVPAVLLAYAGQAAY). Over 367–385 (LRVYPDHVGDAFYASTPQV) the chain is Extracellular. Residues 386–406 (LFWPTLVLALAASVVGSQAMI) traverse the membrane as a helical segment. The Cytoplasmic portion of the chain corresponds to 407 to 437 (SCAFATISHSQAMGCFPRVKVVHTSRQYQGQ). A helical transmembrane segment spans residues 438–458 (VYIPEINLLLGAAACVVTVAA). Over 459-469 (RDTVVIGEAHG) the chain is Extracellular. Residues 470 to 490 (ICVVLVMLITTLLLTVVMVLV) form a helical membrane-spanning segment. Over 491-492 (WR) the chain is Cytoplasmic. The chain crosses the membrane as a helical span at residues 493 to 513 (VNIGWVLVFACVFASTESVYL). Over 514 to 519 (TSVLYK) the chain is Extracellular. A helical membrane pass occupies residues 520–540 (FAHGGYIPVAMSAVLMGVMGV). Topologically, residues 541-790 (WHYVHVRRYK…LLKVGMSYEI (250 aa)) are cytoplasmic.

Belongs to the HAK/KUP transporter (TC 2.A.72.3) family.

The protein resides in the membrane. In terms of biological role, high-affinity potassium transporter. The polypeptide is Potassium transporter 22 (HAK22) (Oryza sativa subsp. japonica (Rice)).